We begin with the raw amino-acid sequence, 147 residues long: 3-hydroxyacyl-[acyl-carrier-protein] dehydratase FabZ (147 aa).

Residue histidine 51 is part of the active site.

It belongs to the thioester dehydratase family. FabZ subfamily.

The protein localises to the cytoplasm. It carries out the reaction a (3R)-hydroxyacyl-[ACP] = a (2E)-enoyl-[ACP] + H2O. In terms of biological role, involved in unsaturated fatty acids biosynthesis. Catalyzes the dehydration of short chain beta-hydroxyacyl-ACPs and long chain saturated and unsaturated beta-hydroxyacyl-ACPs. This chain is 3-hydroxyacyl-[acyl-carrier-protein] dehydratase FabZ, found in Anaplasma marginale (strain Florida).